The sequence spans 359 residues: Photosystem II protein D1 2 (359 aa).

3 consecutive transmembrane segments (helical) span residues 29 to 46 (YVGW…AATT), 118 to 133 (HFLI…EWEL), and 142 to 156 (WICV…AASA). Residue His-118 coordinates chlorophyll a. Position 126 (Tyr-126) interacts with pheophytin a. [CaMn4O5] cluster contacts are provided by Asp-170 and Glu-189. A helical membrane pass occupies residues 197 to 218 (FHMLGVAGVFGGSLFSAMHGSL). His-198 contributes to the chlorophyll a binding site. A quinone contacts are provided by residues His-215 and 264-265 (SF). A Fe cation-binding site is contributed by His-215. Position 272 (His-272) interacts with Fe cation. Residues 274-288 (FLAAWPVVGIWFTAL) form a helical membrane-spanning segment. The [CaMn4O5] cluster site is built by His-332, Glu-333, Asp-342, and Ala-344. A propeptide spanning residues 345-359 (AAESTPVALQAPAIG) is cleaved from the precursor.

The protein belongs to the reaction center PufL/M/PsbA/D family. PSII is composed of 1 copy each of membrane proteins PsbA, PsbB, PsbC, PsbD, PsbE, PsbF, PsbH, PsbI, PsbJ, PsbK, PsbL, PsbM, PsbT, PsbX, PsbY, PsbZ, Psb30/Ycf12, peripheral proteins PsbO, CyanoQ (PsbQ), PsbU, PsbV and a large number of cofactors. It forms dimeric complexes. The D1/D2 heterodimer binds P680, chlorophylls that are the primary electron donor of PSII, and subsequent electron acceptors. It shares a non-heme iron and each subunit binds pheophytin, quinone, additional chlorophylls, carotenoids and lipids. D1 provides most of the ligands for the Mn4-Ca-O5 cluster of the oxygen-evolving complex (OEC). There is also a Cl(-1) ion associated with D1 and D2, which is required for oxygen evolution. The PSII complex binds additional chlorophylls, carotenoids and specific lipids. serves as cofactor. Post-translationally, tyr-161 forms a radical intermediate that is referred to as redox-active TyrZ, YZ or Y-Z. C-terminally processed by CtpA; processing is essential to allow assembly of the oxygen-evolving complex and thus photosynthetic growth.

Its subcellular location is the cellular thylakoid membrane. It catalyses the reaction 2 a plastoquinone + 4 hnu + 2 H2O = 2 a plastoquinol + O2. Its function is as follows. Photosystem II (PSII) is a light-driven water:plastoquinone oxidoreductase that uses light energy to abstract electrons from H(2)O, generating O(2) and a proton gradient subsequently used for ATP formation. It consists of a core antenna complex that captures photons, and an electron transfer chain that converts photonic excitation into a charge separation. The D1/D2 (PsbA/PsbD) reaction center heterodimer binds P680, the primary electron donor of PSII as well as several subsequent electron acceptors. The protein is Photosystem II protein D1 2 of Synechococcus sp. (strain CC9311).